Here is a 92-residue protein sequence, read N- to C-terminus: Alpha-conotoxin-like Rt20.2 (92 aa).

The signal sequence occupies residues 1-24; sequence MPKLEMMLLVLLILPLSYFSAAGG. Residues 25–45 constitute a propeptide that is removed on maturation; that stretch reads QVVQGDLHSDVLARYLQRGDR. Glutamate 49 carries the 4-carboxyglutamate modification. Proline 55 bears the 4-hydroxyproline mark. Cystine bridges form between cysteine 63–cysteine 72, cysteine 68–cysteine 80, cysteine 73–cysteine 90, and cysteine 78–cysteine 92.

This sequence belongs to the conotoxin D superfamily. In terms of assembly, hetero-, homo- or pseudo-homodimer (identical sequence, different post-translational modifications). As to expression, expressed by the venom duct.

It is found in the secreted. Alpha-conotoxins act on postsynaptic membranes, they bind to the nicotinic acetylcholine receptors (nAChR) and thus inhibit them. Through its two C-terminal domains, this homodimeric protein would bind to two nAChR allosteric sites, located outside the nAChR C-loop of the principal binding face and at the adjacent binding interface in a clockwise direction. This toxin specifically blocks mammalian neuronal nAChR of the alpha-7/CHRNA7, alpha-3-beta-2/CHRNA3-CHRNB2 and alpha-4-beta-2/CHRNA4-CHRNB2 subtypes. This is Alpha-conotoxin-like Rt20.2 from Conus rattus (Rat cone).